We begin with the raw amino-acid sequence, 574 residues long: Hyaluronan synthase 3 (574 aa).

Residues 1 to 15 are Cytoplasmic-facing; that stretch reads MPVSLSTALRVVGTS. A helical membrane pass occupies residues 16–36; that stretch reads LFALAVLGGILAAYVTGYQFI. Residues 37 to 44 are Extracellular-facing; it reads HTEKHYLS. Residues 45-65 form a helical membrane-spanning segment; that stretch reads FGLYGAILGLHLFIQSLFAFL. Residues 66 to 398 lie on the Cytoplasmic side of the membrane; sequence EHRRMRAERQ…NALWFHKHHL (333 aa). A helical transmembrane segment spans residues 399–419; it reads WMTYESVVTGFFPFFLIATVI. Residues 420 to 429 are Extracellular-facing; sequence QLFYRGRIWN. A helical membrane pass occupies residues 430-450; it reads ILLFLLTVQLVGIIKATYACF. Residues 451–456 are Cytoplasmic-facing; that stretch reads LRGSAE. A helical transmembrane segment spans residues 457-477; sequence MIFVSLYALLYMSSLLPAKMF. The Extracellular segment spans residues 478 to 494; the sequence is AIATINKSGWGTSGRRT. Residues 495 to 515 form a helical membrane-spanning segment; it reads IVVNFVGLLPVSVWAAVLLGG. At 516–530 the chain is on the cytoplasmic side; the sequence is LAYTAYSQDLLSDTE. Residues 531–551 form a helical membrane-spanning segment; that stretch reads VAFLISGAVLYACYWVALLTL. At 552 to 574 the chain is on the extracellular side; sequence YLAMVARRCGKRKEQCGLVFAEV.

Belongs to the NodC/HAS family. Requires Mg(2+) as cofactor. Post-translationally, O-GlcNAcylation increases the hyaluronan synthase activity, HAS3 stability and its plasma membrane residence. The concentration of UDP-GlcNAc controls the level of O-GlcNAc modification.

It is found in the cell membrane. Its subcellular location is the golgi apparatus membrane. The protein resides in the golgi apparatus. It localises to the trans-Golgi network membrane. The protein localises to the cytoplasmic vesicle. The catalysed reaction is [hyaluronan](n) + UDP-N-acetyl-alpha-D-glucosamine = N-acetyl-beta-D-glucosaminyl-(1-&gt;4)-[hyaluronan](n) + UDP + H(+). The enzyme catalyses N-acetyl-beta-D-glucosaminyl-(1-&gt;4)-[hyaluronan](n) + UDP-alpha-D-glucuronate = [hyaluronan](n+1) + UDP + H(+). It participates in glycan biosynthesis; hyaluronan biosynthesis. Catalyzes the addition of GlcNAc or GlcUA monosaccharides to the nascent hyaluronan polymer. Therefore, it is essential to hyaluronan synthesis a major component of most extracellular matrices that has a structural role in tissues architectures and regulates cell adhesion, migration and differentiation. This is one of three isoenzymes responsible for cellular hyaluronan synthesis. The polypeptide is Hyaluronan synthase 3 (HAS3) (Gallus gallus (Chicken)).